Reading from the N-terminus, the 546-residue chain is Chaperonin GroEL (546 aa).

ATP is bound by residues 29–32 (TLGP), Lys50, 86–90 (DGTTT), Gly415, and Asp495. The interval 526 to 546 (EDNAGGGGMPQGMGGGMPGMM) is disordered. The segment covering 529 to 546 (AGGGGMPQGMGGGMPGMM) has biased composition (gly residues).

The protein belongs to the chaperonin (HSP60) family. As to quaternary structure, forms a cylinder of 14 subunits composed of two heptameric rings stacked back-to-back. Interacts with the co-chaperonin GroES.

It localises to the cytoplasm. It catalyses the reaction ATP + H2O + a folded polypeptide = ADP + phosphate + an unfolded polypeptide.. Together with its co-chaperonin GroES, plays an essential role in assisting protein folding. The GroEL-GroES system forms a nano-cage that allows encapsulation of the non-native substrate proteins and provides a physical environment optimized to promote and accelerate protein folding. The chain is Chaperonin GroEL from Christiangramia forsetii (strain DSM 17595 / CGMCC 1.15422 / KT0803) (Gramella forsetii).